Here is a 199-residue protein sequence, read N- to C-terminus: Probable GTP-binding protein EngB (199 aa).

Residues 22-196 (NWPEFAFSGR…GKFILDLVDS (175 aa)) form the EngB-type G domain. GTP-binding positions include 30 to 37 (GRSNVGKS), 57 to 61 (GRTQS), 75 to 78 (DLPG), 142 to 145 (TKVD), and 175 to 177 (FSA). Positions 37 and 59 each coordinate Mg(2+).

It belongs to the TRAFAC class TrmE-Era-EngA-EngB-Septin-like GTPase superfamily. EngB GTPase family. Mg(2+) is required as a cofactor.

Functionally, necessary for normal cell division and for the maintenance of normal septation. The sequence is that of Probable GTP-binding protein EngB from Halothermothrix orenii (strain H 168 / OCM 544 / DSM 9562).